A 252-amino-acid polypeptide reads, in one-letter code: Probable transcriptional regulator SauR (252 aa).

The HTH iclR-type domain occupies 6–68 (NAAAVRAFRI…AGNRHYECSS (63 aa)). Residues 28–47 (LAAIVQAIELPKQTVHRILK) constitute a DNA-binding region (H-T-H motif). Positions 83–252 (PAAARHAILQ…ADEMVKTFCE (170 aa)) constitute an IclR-ED domain.

In terms of biological role, may regulate transcription of the sauSTU operon. In Cupriavidus necator (strain ATCC 17699 / DSM 428 / KCTC 22496 / NCIMB 10442 / H16 / Stanier 337) (Ralstonia eutropha), this protein is Probable transcriptional regulator SauR (sauR).